Reading from the N-terminus, the 223-residue chain is Sigma non-opioid intracellular receptor 1 (223 aa).

At 1–9 (MCWAVGRRW) the chain is on the lumenal side. The targeting to endoplasmic reticulum-associated lipid droplets stretch occupies residues 2–8 (CWAVGRR). A helical membrane pass occupies residues 10–30 (AWAALLLAVAAVLAQVVWLWL). Residues 31 to 223 (GTQSFVFQHE…LTTYLFGQDA (193 aa)) are Cytoplasmic-facing. The interval 99 to 106 (SLSEYVLL) is important for ligand-binding. The interval 177–223 (VIPSTLGFALADTVFSTQDFLTLFYTLRAYARGLRLELTTYLFGQDA) is C-terminal hydrophobic region.

It belongs to the ERG2 family. In terms of assembly, homotrimer. Forms a ternary complex with ANK2 and ITPR3. The complex is disrupted by agonists. Interacts with KCNA4. Interacts with KCNA2; cocaine consumption leads to increased interaction. Interacts with RNF112 in an oxidative stress-regulated manner.

The protein localises to the nucleus inner membrane. Its subcellular location is the nucleus outer membrane. The protein resides in the nucleus envelope. It localises to the cytoplasmic vesicle. It is found in the endoplasmic reticulum membrane. The protein localises to the membrane. Its subcellular location is the lipid droplet. The protein resides in the cell junction. It localises to the cell membrane. It is found in the cell projection. The protein localises to the growth cone. Its subcellular location is the postsynaptic density membrane. Functions in lipid transport from the endoplasmic reticulum and is involved in a wide array of cellular functions probably through regulation of the biogenesis of lipid microdomains at the plasma membrane. Involved in the regulation of different receptors it plays a role in BDNF signaling and EGF signaling. Also regulates ion channels like the potassium channel and could modulate neurotransmitter release. Plays a role in calcium signaling through modulation together with ANK2 of the ITP3R-dependent calcium efflux at the endoplasmic reticulum. Plays a role in several other cell functions including proliferation, survival and death. Originally identified for its ability to bind various psychoactive drugs it is involved in learning processes, memory and mood alteration. Necessary for proper mitochondrial axonal transport in motor neurons, in particular the retrograde movement of mitochondria. Plays a role in protecting cells against oxidative stress-induced cell death via its interaction with RNF112. The chain is Sigma non-opioid intracellular receptor 1 (SIGMAR1) from Bos taurus (Bovine).